Consider the following 1088-residue polypeptide: RNA-directed RNA polymerase (1088 aa).

A RdRp catalytic domain is found at 501 to 687; it reads LSYGDVTRFL…AKRYIAGGKI (187 aa).

Belongs to the reoviridae RNA-directed RNA polymerase family. As to quaternary structure, interacts with VP3 (Potential). Interacts with VP2; this interaction activates VP1. Interacts with NSP5; this interaction is probably necessary for the formation of functional virus factories. Interacts with NSP2; this interaction is weak. The cofactor is Mg(2+).

It localises to the virion. The enzyme catalyses RNA(n) + a ribonucleoside 5'-triphosphate = RNA(n+1) + diphosphate. In terms of biological role, RNA-directed RNA polymerase that is involved in both transcription and genome replication. Together with VP3 capping enzyme, forms an enzyme complex positioned near the channels situated at each of the five-fold vertices of the core. Following infection, the outermost layer of the virus is lost, leaving a double-layered particle (DLP) made up of the core and VP6 shell. VP1 then catalyzes the transcription of fully conservative plus-strand genomic RNAs that are extruded through the DLP's channels into the cytoplasm where they function as mRNAs for translation of viral proteins. One copy of each of the viral (+)RNAs is also recruited during core assembly, together with newly synthesized polymerase complexes and VP2. The polymerase of these novo-formed particles catalyzes the synthesis of complementary minus-strands leading to dsRNA formation. To do so, the polymerase specifically recognizes and binds 4 bases 5'-UGUG-3' in the conserved 3'-sequence of plus-strand RNA templates. VP2 presumably activates the autoinhibited VP1-RNA complex to coordinate packaging and genome replication. Once dsRNA synthesis is complete, the polymerase switches to the transcriptional mode, thus providing secondary transcription. This is RNA-directed RNA polymerase from Rotavirus A (strain RVA/Human/United States/Wa/1974/G1P1A[8]) (RV-A).